A 69-amino-acid chain; its full sequence is UPF0437 protein AZC_3451 (69 aa).

Belongs to the UPF0437 family.

In Azorhizobium caulinodans (strain ATCC 43989 / DSM 5975 / JCM 20966 / LMG 6465 / NBRC 14845 / NCIMB 13405 / ORS 571), this protein is UPF0437 protein AZC_3451.